The chain runs to 672 residues: Hydroxyproline O-galactosyltransferase GALT5 (672 aa).

Over Met1–Arg28 the chain is Cytoplasmic. The chain crosses the membrane as a helical; Signal-anchor for type II membrane protein span at residues Val29–Phe49. Residues Lys50–Arg672 are Lumenal-facing. Positions Lys191 to Ala392 constitute a Galectin domain. N-linked (GlcNAc...) asparagine glycosylation is found at Asn306 and Asn620.

Belongs to the glycosyltransferase 31 family. It depends on Mn(2+) as a cofactor. Expressed in juvenile leaves, stems, cauline leaves and siliques.

Its subcellular location is the golgi apparatus membrane. The protein operates within protein modification; protein glycosylation. Possesses hydroxyproline O-galactosyltransferase activity. Transfers galactose from UDP-galactose to hydroxyproline residues in the arabinogalactan proteins (AGPs). Is specific for AGPs containing non-contiguous peptidyl hydroxyproline residues. Utilizes UDP-galactose solely as sugar donor. The addition of galactose onto the peptidyl hydroxyproline residues in AGP core proteins represents the first committed step in arabinogalactan polysaccharide addition. AGP glycans play essential roles in both vegetative and reproductive plant growth. This is Hydroxyproline O-galactosyltransferase GALT5 from Arabidopsis thaliana (Mouse-ear cress).